A 354-amino-acid chain; its full sequence is cAMP-dependent protein kinase catalytic subunit 2 (354 aa).

The 257-residue stretch at 45–301 (YITRAVLGNG…SSDVKSHPWF (257 aa)) folds into the Protein kinase domain. ATP-binding positions include 51–59 (LGNGSFGTV) and Lys74. Asp168 functions as the Proton acceptor in the catalytic mechanism. An AGC-kinase C-terminal domain is found at 302-354 (QGVDWFGILNQEVTAPYQPTISGAEDLSNFENFEFKDRYKSRINRHPELFANF).

It belongs to the protein kinase superfamily. AGC Ser/Thr protein kinase family. cAMP subfamily. More abundant in adult body than adult head.

It catalyses the reaction L-seryl-[protein] + ATP = O-phospho-L-seryl-[protein] + ADP + H(+). It carries out the reaction L-threonyl-[protein] + ATP = O-phospho-L-threonyl-[protein] + ADP + H(+). The polypeptide is cAMP-dependent protein kinase catalytic subunit 2 (Pka-C2) (Drosophila melanogaster (Fruit fly)).